The sequence spans 770 residues: Protein PAT1 homolog 1 (770 aa).

The disordered stretch occupies residues 1–42 (MFRYESLEDCPLDEDEDAFQGLGEEDEEIDQFNDDTFGSGAV). Positions 1–84 (MFRYESLEDC…EMDLLGDHEE (84 aa)) are region A; interaction with DDX6/RCK. The involved in nuclear foci localization stretch occupies residues 1-397 (MFRYESLEDC…HRVSHQDHLR (397 aa)). Acidic residues predominate over residues 7 to 33 (LEDCPLDEDEDAFQGLGEEDEEIDQFN). A region N; interaction with decapping machinery region spans residues 85-388 (NLAERLSKMV…LNGTGDRGGH (304 aa)). A Nuclear export signal motif is present at residues 86–95 (LAERLSKMVI). S177 is modified (phosphoserine). A Phosphothreonine modification is found at T178. Phosphoserine occurs at positions 179 and 184. The residue at position 194 (T194) is a Phosphothreonine. R217, R223, and R263 each carry asymmetric dimethylarginine. The segment at 223–397 (RYPAPYGERM…HRVSHQDHLR (175 aa)) is involved in RNA-binding. S278 is subject to Phosphoserine. R284 carries the asymmetric dimethylarginine modification. Disordered regions lie at residues 320–341 (SAPP…PHLQ) and 369–394 (QLQS…SHQD). Pro residues predominate over residues 321–337 (APPPATPPPQQHPPGPG). Residues 369–380 (QLQSRNQHRNLN) show a composition bias toward low complexity. Position 385 is an omega-N-methylarginine (R385). Over residues 385–394 (RGGHRVSHQD) the composition is skewed to basic and acidic residues. The segment at 389–448 (RVSHQDHLRKDPYANLMLQREKDWVSKIQMMQLQSTDPYLDDFYYQNYFEKLEKSSAAEE) is region H. Residues 398 to 770 (KDPYANLMLQ…TKLQLVQGMR (373 aa)) form an involved in nuclear speckle localization region. The segment at 449–770 (MQGDGPKKER…TKLQLVQGMR (322 aa)) is region C.

The protein belongs to the PAT1 family. In terms of assembly, interacts (via region A) with DDX6/RCK. Interacts (via region H and region C) with LSM1 and LSM4. Interacts (via region N) with DCP1A, DCP2, EDC3, EDC4 and XRN1. Interacts with the CCR4-NOT complex. Interacts with the Lsm-containing SMN-Sm protein complex. Interacts with EIF4ENIF1/4E-T.

The protein resides in the cytoplasm. The protein localises to the P-body. It localises to the nucleus. It is found in the PML body. Its subcellular location is the nucleus speckle. RNA-binding protein involved in deadenylation-dependent decapping of mRNAs, leading to the degradation of mRNAs. Acts as a scaffold protein that connects deadenylation and decapping machinery. Required for cytoplasmic mRNA processing body (P-body) assembly. This chain is Protein PAT1 homolog 1 (Patl1), found in Rattus norvegicus (Rat).